Here is a 313-residue protein sequence, read N- to C-terminus: 2-phosphoglycerate kinase (313 aa).

The ATP-cone domain maps to 8 to 95 (SRILVTDKEY…LWRRVLKKHS (88 aa)).

The protein belongs to the 2-phosphoglycerate kinase family. A divalent metal cation is required as a cofactor.

It catalyses the reaction (2R)-2-phosphoglycerate + ATP = (2R)-2,3-bisphosphoglycerate + ADP + H(+). The protein operates within thermoadapter biosynthesis; cyclic 2,3-diphosphoglycerate biosynthesis; cyclic 2,3-diphosphoglycerate from 2-phospho-D-glycerate: step 1/2. Functionally, catalyzes the phosphorylation of 2-phosphoglycerate to 2,3-diphosphoglycerate. Involved in the biosynthesis of cyclic 2,3-bisphosphoglycerate, a thermoprotectant. The polypeptide is 2-phosphoglycerate kinase (Methanococcus maripaludis (strain C6 / ATCC BAA-1332)).